A 706-amino-acid chain; its full sequence is MMGSSSQELQTALTDVSKTCHHLWEENKDLQGRFVNELGELQRLQMVIAQLEQQQRLENVFTVKQQMTELQKRAATLYEHLTQKRNDIVIKLNDGTNFATMLQTQLIGEKLFSWKNAQKLAQIGMPFDNREQLLDEIQIEFEFLADQNWQLNMFSCWMLDLLRRAPQLNDGLAQATIGKLTAITEQLNKLLFMLVSQSFIVSVQPEPVLKTQHKFVTEVRLLIGDKLGIRQHLVNTNVSVKIIAEDEAKQLSVDYDAHKEIRNNKTVGTISNDFEKLTMNERGHLAAKFNNSKLTRIAHRKPPPKGASDLKCAASMQAATDQKYALLFFITPFQMGNLSKEEQFDVWTLSLPIMVTVHGSQDCDAQVAILWHRAFASISRNPNTTDVTAVTWDNLAIMLRNKFSLFTGARRPLSDSDLAYLSEKMLMPNVADQKPITFHRFAKQAMRDDLPFSFWEWFFSIMQLIKQKLLKFWDEGWCIGFISKNDASQSMMMCQHSSFLLRFSDSQTGAVSIGFVCEEADGQKIPFHLAPFTIKDLDQLSLASRIASCPQLKDIRYMYPAIDKEEMLRFFESEERHRVGGGDSPTGYIQSEIVMVAKTNGNFRRMSNAPSMFGADSPSPLSVQSKLDWSPGEVHQNHMMEMSDELGQILTVSDMSGDVETLLGPAFKNNITNYNPHDGNHQHNLHFVDMSQQGMMQQHHNQFYPS.

Positions 477 to 574 (WCIGFISKND…EEMLRFFESE (98 aa)) constitute an SH2 domain.

It belongs to the transcription factor STAT family. As to quaternary structure, forms a homodimer or a heterodimer with a related family member. Expressed in adult and larval pharynx, head ganglia, tail ganglia, ventral nerve cord and body muscles.

Its subcellular location is the cytoplasm. It localises to the nucleus. Functionally, carries out a dual function: signal transduction and activation of transcription. Activated STAT proteins play a role in repression of dauer formation. Neuronal expression is held in check by negative signals through the TGF-beta pathway that target the daf-3 transcription factor. The chain is Signal transducer and activator of transcription 1 from Caenorhabditis elegans.